A 1131-amino-acid polypeptide reads, in one-letter code: Phytochrome (1131 aa).

The segment at 1 to 30 is disordered; sequence MASNSRHTQSQSTGSNNRRSSTNTNTTTNK. Low complexity predominate over residues 9-29; that stretch reads QSQSTGSNNRRSSTNTNTTTN. A GAF domain is found at 227–406; sequence DVGLLCDTVV…ALGLQLNMEL (180 aa). A phytochromobilin-binding site is contributed by Cys-332. 2 consecutive PAS domains span residues 621–692 and 755–826; these read VASE…LRGE and DYRS…TIVL. Residues 903 to 1123 enclose the Histidine kinase domain; it reads YIRQEIKNPL…LVNVEFPMAQ (221 aa).

Belongs to the phytochrome family. In terms of assembly, homodimer. Post-translationally, contains one covalently linked phytochromobilin chromophore.

Its function is as follows. Regulatory photoreceptor which exists in two forms that are reversibly interconvertible by light: the Pr form that absorbs maximally in the red region of the spectrum and the Pfr form that absorbs maximally in the far-red region. Photoconversion of Pr to Pfr induces an array of morphogenic responses, whereas reconversion of Pfr to Pr cancels the induction of those responses. Pfr controls the expression of a number of nuclear genes including those encoding the small subunit of ribulose-bisphosphate carboxylase, chlorophyll A/B binding protein, protochlorophyllide reductase, rRNA, etc. It also controls the expression of its own gene(s) in a negative feedback fashion. The protein is Phytochrome of Pinus sylvestris (Scotch pine).